A 773-amino-acid chain; its full sequence is MFSLSSTVQPQVTVPLSHLINAFHTPKNTSVSLSGVSVSQNQHRDVVPEHEAPSSECMFSDFLTKLNIVSIGKGKIFEGYRSMFMEPAKRMKKSLDTTDNWHIRPEPFSLSIPPSLNLRDLGLSELKIGQIDQLVENLLPGFCKGKNISSHWHTSHVSAQSFFENKYGNLDIFSTLRSSCLYRHHSRALQSICSDLQYWPVFIQSRGFKTLKSRTRRLQSTSERLAETQNIAPSFVKGFLLRDRGSDVESLDKLMKTKNIPEAHQDAFKTGFAEGFLKAQALTQKTNDSLRRTRLILFVLLLFGIYGLLKNPFLSVRFRTTTGLDSAVDPVQMKNVTFEHVKGVEEAKQELQEVVEFLKNPQKFTILGGKLPKGILLVGPPGTGKTLLARAVAGEADVPFYYASGSEFDEMFVGVGASRIRNLFREAKANAPCVIFIDELDSVGGKRIESPMHPYSRQTINQLLAEMDGFKPNEGVIIIGATNFPEALDNALIRPGRFDMQVTVPRPDVKGRTEILKWYLNKIKFDQSVDPEIIARGTVGFSGAELENLVNQAALKAAVDGKEMVTMKELEFSKDKILMGPERRSVEIDNKNKTITAYHESGHAIIAYYTKDAMPINKATIMPRGPTLGHVSLLPENDRWNETRAQLLAQMDVSMGGRVAEELIFGTDHITTGASSDFDNATKIAKRMVTKFGMSEKLGVMTYSDTGKLSPETQSAIEQEIRILLRDSYERAKHILKTHAKEHKNLAEALLTYETLDAKEIQIVLEGKKLEVR.

The Mitochondrial matrix segment spans residues 1–295 (MFSLSSTVQP…TNDSLRRTRL (295 aa)). The chain crosses the membrane as a helical span at residues 296-316 (ILFVLLLFGIYGLLKNPFLSV). Over 317 to 773 (RFRTTTGLDS…VLEGKKLEVR (457 aa)) the chain is Mitochondrial intermembrane. ATP is bound by residues V341, T383, G384, K385, T386, and L387. A Zn(2+)-binding site is contributed by H599. E600 is a catalytic residue. 2 residues coordinate Zn(2+): H603 and D677.

This sequence in the N-terminal section; belongs to the AAA ATPase family. In the C-terminal section; belongs to the peptidase M41 family. As to quaternary structure, homohexamer; may also form heterohexamers. Exists in several complexes of 600-1100 kDa. Interacts with AFG1L. Requires Zn(2+) as cofactor. In terms of processing, proteolytically processed by mitochondrial processing peptidase (MPP) to generate the mature form. Degraded in an OMA1-dependent manner in response to oxidative stress. High expression in cardiac and skeletal muscle mitochondria.

The protein localises to the mitochondrion inner membrane. The protein resides in the mitochondrion. It catalyses the reaction ATP + H2O = ADP + phosphate + H(+). Its function is as follows. ATP-dependent metalloprotease that catalyzes the degradation of folded and unfolded proteins with a suitable degron sequence in the mitochondrial intermembrane region. Plays an important role in regulating mitochondrial morphology and function by cleaving OPA1 at position S2, giving rise to a form of OPA1 that promotes maintenance of normal mitochondrial structure and mitochondrial protein metabolism. Ensures cell proliferation, maintains normal cristae morphology and complex I respiration activity, promotes antiapoptotic activity and protects mitochondria from the accumulation of oxidatively damaged membrane proteins. Required to control the accumulation of nonassembled respiratory chain subunits (NDUFB6, OX4 and ND1). Involved in the mitochondrial adaptation in response to various signals, such as stress or developmental cues, by mediating degradation of mitochondrial proteins to rewire the mitochondrial proteome. Catalyzes degradation of mitochondrial proteins, such as translocases, lipid transfer proteins and metabolic enzymes in response to nutrient starvation in order to limit mitochondrial biogenesis: mechanistically, YME1L is activated by decreased phosphatidylethanolamine levels caused by LPIN1 activity in response to mTORC1 inhibition. Acts as a regulator of adult neural stem cell self-renewal by promoting mitochondrial proteome rewiring, preserving neural stem and progenitor cells self-renewal. Required for normal, constitutive degradation of PRELID1. Catalyzes the degradation of OMA1 in response to membrane depolarization. Mediates degradation of TIMM17A downstream of the integrated stress response (ISR). Catalyzes degradation of MICU1 when MICU1 is not assembled via an interchain disulfide. The chain is ATP-dependent zinc metalloprotease YME1L1 (YME1L1) from Homo sapiens (Human).